The following is a 350-amino-acid chain: Alcohol dehydrogenase 1 (350 aa).

Cys-44, Thr-46, His-67, Cys-98, Cys-101, Cys-104, Cys-112, and Cys-154 together coordinate Zn(2+). Positions 46 and 67 each coordinate an alcohol. An NAD(+)-binding site is contributed by Thr-46. NAD(+) contacts are provided by residues 178-182, Asp-202, Lys-207, 271-273, and Arg-343; these read GAGGG and IGL.

The protein belongs to the zinc-containing alcohol dehydrogenase family. In terms of assembly, homotetramer. Zn(2+) serves as cofactor.

It is found in the cytoplasm. The protein localises to the secreted. It carries out the reaction a primary alcohol + NAD(+) = an aldehyde + NADH + H(+). It catalyses the reaction a secondary alcohol + NAD(+) = a ketone + NADH + H(+). The polypeptide is Alcohol dehydrogenase 1 (alcA) (Emericella nidulans (strain FGSC A4 / ATCC 38163 / CBS 112.46 / NRRL 194 / M139) (Aspergillus nidulans)).